The primary structure comprises 1245 residues: ATP-dependent helicase/nuclease subunit A (1245 aa).

The region spanning 4–477 (TKWTDEQLSA…IQLYKNFRSR (474 aa)) is the UvrD-like helicase ATP-binding domain. Position 25–32 (25–32 (AAAGSGKT)) interacts with ATP. Positions 517-815 (KFKDTIVGGP…RIMSIHKSKG (299 aa)) constitute a UvrD-like helicase C-terminal domain.

It belongs to the helicase family. AddA subfamily. Heterodimer of AddA and AddB/RexB. Requires Mg(2+) as cofactor.

The enzyme catalyses Couples ATP hydrolysis with the unwinding of duplex DNA by translocating in the 3'-5' direction.. The catalysed reaction is ATP + H2O = ADP + phosphate + H(+). Its function is as follows. The heterodimer acts as both an ATP-dependent DNA helicase and an ATP-dependent, dual-direction single-stranded exonuclease. Recognizes the chi site generating a DNA molecule suitable for the initiation of homologous recombination. The AddA nuclease domain is required for chi fragment generation; this subunit has the helicase and 3' -&gt; 5' nuclease activities. The protein is ATP-dependent helicase/nuclease subunit A of Clostridium beijerinckii (strain ATCC 51743 / NCIMB 8052) (Clostridium acetobutylicum).